The primary structure comprises 303 residues: Recombination-associated protein RdgC (303 aa).

This sequence belongs to the RdgC family.

The protein localises to the cytoplasm. Its subcellular location is the nucleoid. Functionally, may be involved in recombination. This chain is Recombination-associated protein RdgC, found in Shewanella sediminis (strain HAW-EB3).